Here is a 144-residue protein sequence, read N- to C-terminus: Ribosomally synthesized cyclic peptide phomopsin precursor phomA' (144 aa).

Residues 1–18 (MRFTPAIVIAAFCSLAVA) form the signal peptide. Propeptides lie at residues 19-35 (APAA…AVED), 42-50 (KKRGEAVED), 57-65 (KKRGEAVED), 72-79 (KRGEAVED), 86-94 (KKRGEAVED), 101-108 (KRGEAVED), 115-123 (KKRGEAVED), 130-137 (KRGEAVED), and K144.

Post-translationally, phomA' is processed by several endopeptidases including kexin proteases as well as the cluster-specific S41 family peptidase phomP1' and the peptidase phomG' to produce 5 identical copies of the hexapeptide Tyr-Val-Ile-Pro-Ile-Asp and 3 identical copies of Tyr-Val-Ile-Pro-Phe-Asp, that are further modified into phomapsins A and P, respectively. The timing and order of proteolysis of the phomA' precursor and PTMs are still unknown. Two tyrosinase-like enzyme phomQ1' and PhomQ2, catalyze the chlorination and hydroxylation of Tyr, respectively. PhomYb', is proposed to be involved in the construction of the macrocyclic structure. The other four ustYa family proteins may be involved in PTMs that generate the unique structure of phomopsin A. PhomYa' is required for the hydroxylation of C-beta of Tyr. PhomYc', PhomYd', and PhomYe' are responsible for the biosynthesis of 2,3-dehydroisoleucine (dIle), 2,3-dehydroaspartic acid (dAsp), and 3,4-dehydroproline (dPro), respectively. While dIle formation by phomYc is indispensable for the installation of dAsp by phomYd, the order of the other PTMs have not been elucidated yet. Most of the biosynthetic enzymes likely have broad substrate specificity, and thus, there might be a metabolic grid from a precursor to phomopsin A. The enzyme(s) responsible for the biosynthesis of 3,4-dehydrovaline (dVal) have also not been identified yet. Finally, PhomM' acts as an S-adenosylmethionine-dependent alpha-N-methyltransferase that catalyzes two successive N-methylation reactions, converting N-desmethyl-phomopsin A to phomopsin A and phomopsin A further to an N,N-dimethylated congener called phomopsin E.

The protein operates within mycotoxin biosynthesis. Its function is as follows. Ribosomally synthesized cyclic peptide phomopsin precursor; part of the gene cluster that mediates the biosynthesis of the phomopsins, a group of hexapeptide mycotoxins which infects lupins and causes lupinosis disease in livestock. The phomA' translated product contains a 5-fold repeated peptide embedding the hexapeptide Tyr-Val-Ile-Pro-Ile-Asp and a 3-fold repeated peptide embedding the hexapeptide Tyr-Val-Ile-Pro-Phe-Asp, that is converted into phomapsin A and phomapsin P, respectively. After being excised from the precursor peptide by kexin proteases, the core peptides are cyclized and modified post-translationally by enzymes encoded within the corresponding gene cluster. The protein is Ribosomally synthesized cyclic peptide phomopsin precursor phomA' of Diaporthe leptostromiformis (Lupinosis disease fungus).